Consider the following 366-residue polypeptide: Chorismate synthase (366 aa).

Residues Arg48 and Arg54 each coordinate NADP(+). FMN contacts are provided by residues 125–127 (RSS), 238–239 (NA), Gly278, 293–297 (KPTSS), and Arg319.

It belongs to the chorismate synthase family. Homotetramer. FMNH2 is required as a cofactor.

The enzyme catalyses 5-O-(1-carboxyvinyl)-3-phosphoshikimate = chorismate + phosphate. It participates in metabolic intermediate biosynthesis; chorismate biosynthesis; chorismate from D-erythrose 4-phosphate and phosphoenolpyruvate: step 7/7. Catalyzes the anti-1,4-elimination of the C-3 phosphate and the C-6 proR hydrogen from 5-enolpyruvylshikimate-3-phosphate (EPSP) to yield chorismate, which is the branch point compound that serves as the starting substrate for the three terminal pathways of aromatic amino acid biosynthesis. This reaction introduces a second double bond into the aromatic ring system. The protein is Chorismate synthase of Chromobacterium violaceum (strain ATCC 12472 / DSM 30191 / JCM 1249 / CCUG 213 / NBRC 12614 / NCIMB 9131 / NCTC 9757 / MK).